We begin with the raw amino-acid sequence, 141 residues long: uncharacterized protein (141 aa).

The segment at 1 to 101 (FRGRAPRPLV…PDPGRSRRAT (101 aa)) is disordered. Residues 27-70 (QVRDCGREGDLRAGKAADRRLPRARETCSRFGEGVRQKDVHKGP) are compositionally biased toward basic and acidic residues.

This is an uncharacterized protein from Dhori virus (strain Indian/1313/61) (Dho).